Reading from the N-terminus, the 108-residue chain is ATP synthase epsilon chain (108 aa).

This sequence belongs to the ATPase epsilon chain family. F-type ATPases have 2 components, CF(1) - the catalytic core - and CF(0) - the membrane proton channel. CF(1) has five subunits: alpha(3), beta(3), gamma(1), delta(1), epsilon(1). CF(0) has three main subunits: a, b and c.

The protein localises to the cell inner membrane. In terms of biological role, produces ATP from ADP in the presence of a proton gradient across the membrane. In Rickettsia bellii (strain OSU 85-389), this protein is ATP synthase epsilon chain.